Consider the following 444-residue polypeptide: ATP-dependent protease ATPase subunit HslU (444 aa).

ATP is bound by residues Ile-18, Gly-60 to Glu-65, Asp-256, Glu-322, and Arg-394.

This sequence belongs to the ClpX chaperone family. HslU subfamily. A double ring-shaped homohexamer of HslV is capped on each side by a ring-shaped HslU homohexamer. The assembly of the HslU/HslV complex is dependent on binding of ATP.

Its subcellular location is the cytoplasm. ATPase subunit of a proteasome-like degradation complex; this subunit has chaperone activity. The binding of ATP and its subsequent hydrolysis by HslU are essential for unfolding of protein substrates subsequently hydrolyzed by HslV. HslU recognizes the N-terminal part of its protein substrates and unfolds these before they are guided to HslV for hydrolysis. The sequence is that of ATP-dependent protease ATPase subunit HslU from Serratia proteamaculans (strain 568).